We begin with the raw amino-acid sequence, 272 residues long: NAD kinase (272 aa).

The Proton acceptor role is filled by aspartate 50. NAD(+) is bound by residues 50–51 (DG), 126–127 (NE), arginine 152, aspartate 154, 165–170 (TAYNKS), and alanine 189.

This sequence belongs to the NAD kinase family. It depends on a divalent metal cation as a cofactor.

The protein localises to the cytoplasm. The enzyme catalyses NAD(+) + ATP = ADP + NADP(+) + H(+). In terms of biological role, involved in the regulation of the intracellular balance of NAD and NADP, and is a key enzyme in the biosynthesis of NADP. Catalyzes specifically the phosphorylation on 2'-hydroxyl of the adenosine moiety of NAD to yield NADP. This Streptococcus pneumoniae serotype 19F (strain G54) protein is NAD kinase.